Reading from the N-terminus, the 29-residue chain is Cycloviolacin-O21 (29 aa).

The cyclopeptide (Gly-Asn) cross-link spans 1 to 29 (GLPVCGETCVTGSCYTPGCTCSWPVCTRN). 3 cysteine pairs are disulfide-bonded: Cys-5–Cys-19, Cys-9–Cys-21, and Cys-14–Cys-26.

In terms of processing, this is a cyclic peptide. In terms of tissue distribution, expressed in leaves, petals, petioles, and runners but not in roots (at protein level).

Its function is as follows. Probably participates in a plant defense mechanism. The protein is Cycloviolacin-O21 of Viola odorata (Sweet violet).